The sequence spans 284 residues: D-tagatose-1,6-bisphosphate aldolase subunit GatY (284 aa).

Asp82 (proton donor) is an active-site residue. 2 residues coordinate Zn(2+): His83 and His180. Gly181 serves as a coordination point for dihydroxyacetone phosphate. His208 contacts Zn(2+). Dihydroxyacetone phosphate is bound by residues 209–211 (GAS) and 230–233 (NVAT).

The protein belongs to the class II fructose-bisphosphate aldolase family. TagBP aldolase GatY subfamily. Forms a complex with GatZ. It depends on Zn(2+) as a cofactor.

The enzyme catalyses D-tagatofuranose 1,6-bisphosphate = D-glyceraldehyde 3-phosphate + dihydroxyacetone phosphate. Its pathway is carbohydrate metabolism; D-tagatose 6-phosphate degradation; D-glyceraldehyde 3-phosphate and glycerone phosphate from D-tagatose 6-phosphate: step 2/2. Its function is as follows. Catalytic subunit of the tagatose-1,6-bisphosphate aldolase GatYZ, which catalyzes the reversible aldol condensation of dihydroxyacetone phosphate (DHAP or glycerone-phosphate) with glyceraldehyde 3-phosphate (G3P) to produce tagatose 1,6-bisphosphate (TBP). Requires GatZ subunit for full activity and stability. Is involved in the catabolism of galactitol. This chain is D-tagatose-1,6-bisphosphate aldolase subunit GatY, found in Shigella flexneri.